A 957-amino-acid chain; its full sequence is Glycine dehydrogenase (decarboxylating) (957 aa).

Lys708 is modified (N6-(pyridoxal phosphate)lysine).

It belongs to the GcvP family. The glycine cleavage system is composed of four proteins: P, T, L and H. Pyridoxal 5'-phosphate serves as cofactor.

The enzyme catalyses N(6)-[(R)-lipoyl]-L-lysyl-[glycine-cleavage complex H protein] + glycine + H(+) = N(6)-[(R)-S(8)-aminomethyldihydrolipoyl]-L-lysyl-[glycine-cleavage complex H protein] + CO2. Functionally, the glycine cleavage system catalyzes the degradation of glycine. The P protein binds the alpha-amino group of glycine through its pyridoxal phosphate cofactor; CO(2) is released and the remaining methylamine moiety is then transferred to the lipoamide cofactor of the H protein. The polypeptide is Glycine dehydrogenase (decarboxylating) (Salmonella typhi).